Here is a 155-residue protein sequence, read N- to C-terminus: V-type proton ATPase 16 kDa proteolipid subunit c (155 aa).

Topologically, residues 1 to 10 (MADIKNNPEY) are lumenal. The chain crosses the membrane as a helical span at residues 11–33 (SSFFGVMGASSAMVFSAMGAAYG). Residues 34–55 (TAKSGTGIAAMSVMRPELIMKS) lie on the Cytoplasmic side of the membrane. Residues 56 to 76 (IIPVVMAGIIAIYGLVVAVLI) traverse the membrane as a helical segment. At 77 to 92 (ANSLTDGITLYRSFLQ) the chain is on the lumenal side. Residues 93-114 (LGAGLSVGLSGLAAGFAIGIVG) form a helical membrane-spanning segment. The Cytoplasmic segment spans residues 115–131 (DAGVRGTAQQPRLFVGM). The chain crosses the membrane as a helical span at residues 132–152 (ILILIFAEVLGLYGLIVALIL). Topologically, residues 153 to 155 (STK) are lumenal.

The protein belongs to the V-ATPase proteolipid subunit family. As to quaternary structure, V-ATPase is a heteromultimeric enzyme made up of two complexes: the ATP-hydrolytic V1 complex and the proton translocation V0 complex. The V1 complex consists of three catalytic AB heterodimers that form a heterohexamer, three peripheral stalks each consisting of EG heterodimers, one central rotor including subunits D and F, and the regulatory subunits C and H. The proton translocation complex V0 consists of the proton transport subunit a, a ring of proteolipid subunits c9c'', rotary subunit d, subunits e and f, and the accessory subunits ATP6AP1/Ac45 and ATP6AP2/PRR. Interacts with the V0 complex V-ATPase subunit a4 ATP6V0A4. Interacts with LASS2. Interacts with RNF182; this interaction leads to ubiquitination and degradation via the proteasome pathway. Ubiquitinated by RNF182, leading to its degradation via the ubiquitin-proteasome pathway.

The protein resides in the cytoplasmic vesicle. Its subcellular location is the clathrin-coated vesicle membrane. The protein localises to the secretory vesicle. It localises to the synaptic vesicle membrane. In terms of biological role, proton-conducting pore forming subunit of the V0 complex of vacuolar(H+)-ATPase (V-ATPase), a multisubunit enzyme composed of a peripheral complex (V1) that hydrolyzes ATP and a membrane integral complex (V0) that translocates protons. V-ATPase is responsible for acidifying and maintaining the pH of intracellular compartments and in some cell types, is targeted to the plasma membrane, where it is responsible for acidifying the extracellular environment. The polypeptide is V-type proton ATPase 16 kDa proteolipid subunit c (Atp6v0c) (Mus musculus (Mouse)).